The following is a 293-amino-acid chain: Fructose-bisphosphate aldolase (293 aa).

S50 is a binding site for D-glyceraldehyde 3-phosphate. D85 functions as the Proton donor in the catalytic mechanism. Residues H86, D106, E136, and H178 each contribute to the Zn(2+) site. G179 serves as a coordination point for dihydroxyacetone phosphate. Residue H208 coordinates Zn(2+). Residues 209–211 and 230–233 each bind dihydroxyacetone phosphate; these read GGS and NVNT.

This sequence belongs to the class II fructose-bisphosphate aldolase family. Zn(2+) is required as a cofactor.

The enzyme catalyses beta-D-fructose 1,6-bisphosphate = D-glyceraldehyde 3-phosphate + dihydroxyacetone phosphate. Its pathway is carbohydrate degradation; glycolysis; D-glyceraldehyde 3-phosphate and glycerone phosphate from D-glucose: step 4/4. Its function is as follows. Catalyzes the aldol condensation of dihydroxyacetone phosphate (DHAP or glycerone-phosphate) with glyceraldehyde 3-phosphate (G3P) to form fructose 1,6-bisphosphate (FBP) in gluconeogenesis and the reverse reaction in glycolysis. This is Fructose-bisphosphate aldolase (fba) from Streptococcus pyogenes serotype M3 (strain ATCC BAA-595 / MGAS315).